The chain runs to 491 residues: 2,3-bisphosphoglycerate-independent phosphoglycerate mutase (491 aa).

The Mn(2+) site is built by D11 and S61. Residue S61 is the Phosphoserine intermediate of the active site. Substrate-binding positions include H118, 147-148 (RD), R177, R183, 248-251 (RSDR), and K320. D386, H390, D427, H428, and H445 together coordinate Mn(2+).

It belongs to the BPG-independent phosphoglycerate mutase family. Monomer. Mn(2+) is required as a cofactor.

It catalyses the reaction (2R)-2-phosphoglycerate = (2R)-3-phosphoglycerate. Its pathway is carbohydrate degradation; glycolysis; pyruvate from D-glyceraldehyde 3-phosphate: step 3/5. Functionally, catalyzes the interconversion of 2-phosphoglycerate and 3-phosphoglycerate. The chain is 2,3-bisphosphoglycerate-independent phosphoglycerate mutase from Aliarcobacter butzleri (strain RM4018) (Arcobacter butzleri).